A 163-amino-acid chain; its full sequence is Neurotrophin-3 (163 aa).

Residues 1–3 (IQS) form the signal peptide. The propeptide occupies 4–119 (TSMDQGILTE…VLNRTSRRKR (116 aa)). The disordered stretch occupies residues 35–61 (KQTARTKDGTQTTVKKSEAEADATASQ). N-linked (GlcNAc...) asparagine glycosylation is present at N112.

It belongs to the NGF-beta family.

It is found in the secreted. Its function is as follows. Seems to promote the survival of visceral and proprioceptive sensory neurons. This chain is Neurotrophin-3 (NTF3), found in Corallus caninus (Emerald tree boa).